The primary structure comprises 557 residues: Glucose-6-phosphate isomerase (557 aa).

E361 functions as the Proton donor in the catalytic mechanism. Active-site residues include H392 and K520.

It belongs to the GPI family.

It is found in the cytoplasm. It carries out the reaction alpha-D-glucose 6-phosphate = beta-D-fructose 6-phosphate. The protein operates within carbohydrate biosynthesis; gluconeogenesis. It functions in the pathway carbohydrate degradation; glycolysis; D-glyceraldehyde 3-phosphate and glycerone phosphate from D-glucose: step 2/4. Functionally, catalyzes the reversible isomerization of glucose-6-phosphate to fructose-6-phosphate. The sequence is that of Glucose-6-phosphate isomerase from Acinetobacter baylyi (strain ATCC 33305 / BD413 / ADP1).